The following is a 513-amino-acid chain: Beta-glucosidase 5 (513 aa).

The N-terminal stretch at 1–26 (MAAAIAVVYLSLLLLLLHGAAPAVLG) is a signal peptide. Gln46 is an a beta-D-glucoside binding site. The Proton donor role is filled by Glu192. An intrachain disulfide couples Cys211 to Cys220. N-linked (GlcNAc...) asparagine glycosylation is found at Asn224 and Asn273. Tyr336 and Glu405 together coordinate a beta-D-glucoside. Catalysis depends on Glu405, which acts as the Nucleophile. N-linked (GlcNAc...) asparagine glycosylation occurs at Asn412. A beta-D-glucoside is bound by residues Trp447, 454–455 (EY), and Tyr463.

It belongs to the glycosyl hydrolase 1 family.

The catalysed reaction is Hydrolysis of terminal, non-reducing beta-D-glucosyl residues with release of beta-D-glucose.. This chain is Beta-glucosidase 5 (BGLU5), found in Oryza sativa subsp. japonica (Rice).